A 476-amino-acid polypeptide reads, in one-letter code: 3-isopropylmalate dehydratase large subunit (476 aa).

The [4Fe-4S] cluster site is built by Cys353, Cys413, and Cys416.

It belongs to the aconitase/IPM isomerase family. LeuC type 1 subfamily. In terms of assembly, heterodimer of LeuC and LeuD. [4Fe-4S] cluster serves as cofactor.

The catalysed reaction is (2R,3S)-3-isopropylmalate = (2S)-2-isopropylmalate. The protein operates within amino-acid biosynthesis; L-leucine biosynthesis; L-leucine from 3-methyl-2-oxobutanoate: step 2/4. Catalyzes the isomerization between 2-isopropylmalate and 3-isopropylmalate, via the formation of 2-isopropylmaleate. This is 3-isopropylmalate dehydratase large subunit from Yersinia pseudotuberculosis serotype IB (strain PB1/+).